Here is a 112-residue protein sequence, read N- to C-terminus: Large ribosomal subunit protein bL20c (112 aa).

The protein belongs to the bacterial ribosomal protein bL20 family.

It is found in the plastid. The protein resides in the chloroplast. Functionally, binds directly to 23S ribosomal RNA and is necessary for the in vitro assembly process of the 50S ribosomal subunit. It is not involved in the protein synthesizing functions of that subunit. The protein is Large ribosomal subunit protein bL20c (rpl20) of Chlamydomonas reinhardtii (Chlamydomonas smithii).